A 764-amino-acid polypeptide reads, in one-letter code: Mitogen-activated protein kinase kinase kinase 1b (764 aa).

Disordered stretches follow at residues 1 to 81 (MVEE…IQQQ), 120 to 260 (KSIA…TATR), 325 to 348 (PNLA…SSAM), and 360 to 392 (VPEL…HYGS). Over residues 14-30 (GSWGSGEDGGSSHGGKG) the composition is skewed to gly residues. 2 stretches are compositionally biased toward low complexity: residues 60-76 (VHST…LSKS) and 125-135 (SQPLSSPSLSQ). Over residues 136-145 (EHGEASHSND) the composition is skewed to basic and acidic residues. Polar residues predominate over residues 184–201 (YVNSQPQNHYGRKNSPSQ). Residues 431–684 (WFKGDFIGSG…CDMLLTHPFI (254 aa)) enclose the Protein kinase domain. ATP is bound by residues 437–445 (IGSGTFGSV) and lysine 459. Residue aspartate 554 is the Proton acceptor of the active site. The disordered stretch occupies residues 706-764 (EERSIDVSESPSIATSSQSGSSPSVAGDAVSPASVAVRPRSMRTLRSEFSMSSPESIAS). Positions 715–729 (SPSIATSSQSGSSPS) are enriched in low complexity. Residues 752–764 (SEFSMSSPESIAS) show a composition bias toward polar residues.

The protein belongs to the protein kinase superfamily. STE Ser/Thr protein kinase family. MAP kinase kinase kinase subfamily.

It is found in the cell membrane. It catalyses the reaction L-seryl-[protein] + ATP = O-phospho-L-seryl-[protein] + ADP + H(+). The enzyme catalyses L-threonyl-[protein] + ATP = O-phospho-L-threonyl-[protein] + ADP + H(+). Its function is as follows. The CERK1, MEKK1a/b, MKK1a/b/c and MPK4a/b proteins are involved in pathogen defense. The pathway induces rapid growth inhibition, cell wall depositions and accumulation of defense-related transcripts. This protein is required for responses to chitin and acts redundantly with MEKK1a. In Physcomitrium patens (Spreading-leaved earth moss), this protein is Mitogen-activated protein kinase kinase kinase 1b (MEKK1b).